The following is a 456-amino-acid chain: Bifunctional protein GlmU (456 aa).

The segment at 1-229 (MLNSAMSVVI…ISETDGVNNR (229 aa)) is pyrophosphorylase. UDP-N-acetyl-alpha-D-glucosamine is bound by residues 11–14 (LAAG), Lys-25, Gln-76, 81–82 (GT), 103–105 (YGD), Gly-140, Glu-154, Asn-169, and Asn-227. Asp-105 contributes to the Mg(2+) binding site. Residue Asn-227 coordinates Mg(2+). The tract at residues 230 to 250 (LQLSRLERIYQAEQAEKLLLS) is linker. Positions 251 to 456 (GVMLRDPARF…QGWQRPVKKK (206 aa)) are N-acetyltransferase. UDP-N-acetyl-alpha-D-glucosamine is bound by residues Arg-333 and Lys-351. His-363 acts as the Proton acceptor in catalysis. 2 residues coordinate UDP-N-acetyl-alpha-D-glucosamine: Tyr-366 and Asn-377. Acetyl-CoA contacts are provided by residues Ala-380, 386 to 387 (NY), Ser-405, Ala-423, and Arg-440.

The protein in the N-terminal section; belongs to the N-acetylglucosamine-1-phosphate uridyltransferase family. In the C-terminal section; belongs to the transferase hexapeptide repeat family. In terms of assembly, homotrimer. Mg(2+) serves as cofactor.

Its subcellular location is the cytoplasm. It catalyses the reaction alpha-D-glucosamine 1-phosphate + acetyl-CoA = N-acetyl-alpha-D-glucosamine 1-phosphate + CoA + H(+). The enzyme catalyses N-acetyl-alpha-D-glucosamine 1-phosphate + UTP + H(+) = UDP-N-acetyl-alpha-D-glucosamine + diphosphate. It participates in nucleotide-sugar biosynthesis; UDP-N-acetyl-alpha-D-glucosamine biosynthesis; N-acetyl-alpha-D-glucosamine 1-phosphate from alpha-D-glucosamine 6-phosphate (route II): step 2/2. The protein operates within nucleotide-sugar biosynthesis; UDP-N-acetyl-alpha-D-glucosamine biosynthesis; UDP-N-acetyl-alpha-D-glucosamine from N-acetyl-alpha-D-glucosamine 1-phosphate: step 1/1. Its pathway is bacterial outer membrane biogenesis; LPS lipid A biosynthesis. In terms of biological role, catalyzes the last two sequential reactions in the de novo biosynthetic pathway for UDP-N-acetylglucosamine (UDP-GlcNAc). The C-terminal domain catalyzes the transfer of acetyl group from acetyl coenzyme A to glucosamine-1-phosphate (GlcN-1-P) to produce N-acetylglucosamine-1-phosphate (GlcNAc-1-P), which is converted into UDP-GlcNAc by the transfer of uridine 5-monophosphate (from uridine 5-triphosphate), a reaction catalyzed by the N-terminal domain. The polypeptide is Bifunctional protein GlmU (Salmonella schwarzengrund (strain CVM19633)).